Here is a 418-residue protein sequence, read N- to C-terminus: (+)-T-muurolol synthase ((2E,6E)-farnesyl diphosphate cyclizing) (418 aa).

Mg(2+)-binding residues include Asp-83 and Asp-88. The short motif at Asp-83–Asp-88 is the DDXXXD motif element. Position 179 (Arg-179) interacts with substrate. Residues Asn-225 and Ser-229 each coordinate Mg(2+). Lys-232 is a binding site for substrate. Position 233 (Glu-233) interacts with Mg(2+). Arg-312–Tyr-313 contacts substrate. The interval Leu-354–Arg-418 is disordered. The span at Ala-402–Thr-412 shows a compositional bias: polar residues.

Belongs to the terpene synthase family. Requires Mg(2+) as cofactor.

The enzyme catalyses (2E,6E)-farnesyl diphosphate + H2O = (+)-T-muurolol + diphosphate. Its pathway is secondary metabolite biosynthesis; terpenoid biosynthesis. In terms of biological role, catalyzes the conversion of (2E,6E)-farnesyl diphosphate (FPP) into (+)-T-muurolol via a 1,10-cyclization, which requires isomerization of FPP to nerolidyl diphosphate (NPP) and then abstraction of the pyrophosphate from intermediate NPP leading to a (E,Z)-germacradienyl (helminthogermacradienyl) cation. The polypeptide is (+)-T-muurolol synthase ((2E,6E)-farnesyl diphosphate cyclizing) (Streptomyces clavuligerus).